Here is a 25-residue protein sequence, read N- to C-terminus: GLLSVLGSVVKHVIPHVVPVIAEHL.

The residue at position 25 (leucine 25) is a Leucine amide.

In terms of tissue distribution, expressed by the skin parotoid and/or rostral glands.

The protein localises to the secreted. Functionally, antibacterial peptide, that adopts an alpha helical conformation which can disrupt bacterial membranes. Each caerin displays a different antimicrobial specificity. The protein is Caerin-1.5 of Ranoidea caerulea (Green tree frog).